The primary structure comprises 146 residues: MSLVVQEQGSFQHILRLLNTNVDGNIKIVYALTTIKGVGRRYSNLVCKKADVDLHKRAGELTQEELERIVQIMQNPTHYKIPAWFLNRQNDITDGKDYHTLANNVESKLRDDLERLKKIRAHRGIRHFWGLRVRGQHTKTTGRRRA.

At S2 the chain carries N-acetylserine. A Glycyl lysine isopeptide (Lys-Gly) (interchain with G-Cter in ubiquitin) cross-link involves residue K36. The residue at position 48 (K48) is an N6-methyllysine; by RKM1. Glycyl lysine isopeptide (Lys-Gly) (interchain with G-Cter in ubiquitin) cross-links involve residues K49, K80, and K96.

The protein belongs to the universal ribosomal protein uS13 family. Component of the small ribosomal subunit (SSU). Mature yeast ribosomes consist of a small (40S) and a large (60S) subunit. The 40S small subunit contains 1 molecule of ribosomal RNA (18S rRNA) and 33 different proteins (encoded by 57 genes). The large 60S subunit contains 3 rRNA molecules (25S, 5.8S and 5S rRNA) and 46 different proteins (encoded by 81 genes). N-terminally acetylated by acetyltransferase NatA.

The protein localises to the cytoplasm. In terms of biological role, component of the ribosome, a large ribonucleoprotein complex responsible for the synthesis of proteins in the cell. The small ribosomal subunit (SSU) binds messenger RNAs (mRNAs) and translates the encoded message by selecting cognate aminoacyl-transfer RNA (tRNA) molecules. The large subunit (LSU) contains the ribosomal catalytic site termed the peptidyl transferase center (PTC), which catalyzes the formation of peptide bonds, thereby polymerizing the amino acids delivered by tRNAs into a polypeptide chain. The nascent polypeptides leave the ribosome through a tunnel in the LSU and interact with protein factors that function in enzymatic processing, targeting, and the membrane insertion of nascent chains at the exit of the ribosomal tunnel. The chain is Small ribosomal subunit protein uS13A from Saccharomyces cerevisiae (strain ATCC 204508 / S288c) (Baker's yeast).